The sequence spans 180 residues: Napin (180 aa).

The signal sequence occupies residues 1 to 21 (MANKLFLVSATLAFFFLLTNA). Propeptides lie at residues 22 to 38 (SIYR…ATNP) and 75 to 94 (PSWT…NPQG).

It belongs to the 2S seed storage albumins family. As to quaternary structure, the mature protein consists of a small and a large chain linked by disulfide bonds. In terms of tissue distribution, cotyledons and the axis.

In terms of biological role, the small, basic, water-soluble napins are one of the two major kinds of storage proteins synthesized in the seed during its maturation. This is Napin (NAP1) from Brassica napus (Rape).